We begin with the raw amino-acid sequence, 437 residues long: D-aminoacyl-tRNA deacylase (437 aa).

This sequence belongs to the DtdA deacylase family. In terms of assembly, monomer. The cofactor is Zn(2+).

It carries out the reaction a D-aminoacyl-tRNA + H2O = a tRNA + a D-alpha-amino acid + H(+). It catalyses the reaction glycyl-tRNA(Ala) + H2O = tRNA(Ala) + glycine + H(+). Functionally, D-aminoacyl-tRNA deacylase with broad substrate specificity. By recycling D-aminoacyl-tRNA to D-amino acids and free tRNA molecules, this enzyme counteracts the toxicity associated with the formation of D-aminoacyl-tRNA entities in vivo. The polypeptide is D-aminoacyl-tRNA deacylase (Methanoculleus marisnigri (strain ATCC 35101 / DSM 1498 / JR1)).